A 65-amino-acid polypeptide reads, in one-letter code: VRDAYIAQNYNCVYFCMKDDYCNDLCTKNGASSGYCQWAGKYGNACWCYALPDNVPIRIPGKCHS.

An LCN-type CS-alpha/beta domain is found at Arg2 to His64. Disulfide bonds link Cys12–Cys63, Cys16–Cys36, Cys22–Cys46, and Cys26–Cys48.

This sequence belongs to the long (4 C-C) scorpion toxin superfamily. Sodium channel inhibitor family. Alpha subfamily. Expressed by the venom gland.

The protein localises to the secreted. Alpha toxins bind voltage-independently at site-3 of sodium channels (Nav) and inhibit the inactivation of the activated channels, thereby blocking neuronal transmission. This contractive toxin is highly toxic to insects and barely toxic to mammals. The chain is Alpha-insect toxin BotIT1 from Buthus occitanus tunetanus (Common European scorpion).